The following is a 411-amino-acid chain: Imidazolonepropionase (411 aa).

Fe(3+) contacts are provided by His-78 and His-80. The Zn(2+) site is built by His-78 and His-80. 3 residues coordinate 4-imidazolone-5-propanoate: Arg-87, Tyr-150, and His-183. Tyr-150 contributes to the N-formimidoyl-L-glutamate binding site. His-248 provides a ligand contact to Fe(3+). Position 248 (His-248) interacts with Zn(2+). Gln-251 serves as a coordination point for 4-imidazolone-5-propanoate. Residue Asp-322 participates in Fe(3+) binding. Position 322 (Asp-322) interacts with Zn(2+). Positions 324 and 326 each coordinate N-formimidoyl-L-glutamate. Thr-327 contributes to the 4-imidazolone-5-propanoate binding site.

The protein belongs to the metallo-dependent hydrolases superfamily. HutI family. The cofactor is Zn(2+). Fe(3+) serves as cofactor.

The protein resides in the cytoplasm. The catalysed reaction is 4-imidazolone-5-propanoate + H2O = N-formimidoyl-L-glutamate. It functions in the pathway amino-acid degradation; L-histidine degradation into L-glutamate; N-formimidoyl-L-glutamate from L-histidine: step 3/3. Catalyzes the hydrolytic cleavage of the carbon-nitrogen bond in imidazolone-5-propanoate to yield N-formimidoyl-L-glutamate. It is the third step in the universal histidine degradation pathway. The sequence is that of Imidazolonepropionase from Flavobacterium psychrophilum (strain ATCC 49511 / DSM 21280 / CIP 103535 / JIP02/86).